We begin with the raw amino-acid sequence, 352 residues long: Ly6/PLAUR domain-containing protein 3 (352 aa).

An N-terminal signal peptide occupies residues 1–32 (MDAARRGDTQPVMWTTRWLLLLPLLLCEGAQA). Positions 35-128 (CYSCVQKADD…LNLTLRGLNP (94 aa)) constitute a UPAR/Ly6 1 domain. 4 N-linked (GlcNAc...) asparagine glycosylation sites follow: Asn-120, Asn-131, Asn-178, and Asn-185. In terms of domain architecture, UPAR/Ly6 2 spans 142–224 (CYSCMGLSRE…GSCCQGPRCN (83 aa)). A compositionally biased stretch (pro residues) spans 236–249 (RIPPLVLLPPPTTP). Residues 236–330 (RIPPLVLLPP…KGGAQIPSKG (95 aa)) form a disordered region. Positions 250–285 (APSTRTQNSSSTTSTTAPTTATTTIKPTTVQASHTS) are enriched in low complexity. Basic and acidic residues-rich tracts occupy residues 286 to 300 (STHE…EEGS) and 309 to 320 (HQDRSNMGKFPE). Gly-330 carries GPI-anchor amidated glycine lipidation. The propeptide at 331-352 (GSDALGSWLSAILLTVVAGAML) is removed in mature form.

Interacts with AGR2 and AGR3. Binds laminin-1 and laminin-5. Interacts with LGALS3. As to expression, found predominantly on the basal layers of squamous epithelium. Expressed in the gravid uterus and on epithelial of the upper gastrointestinal tract. It has been found in tumor lines which metastasize via the lymphatic system.

The protein localises to the cell membrane. In terms of biological role, supports cell migration. May be involved in tumor progression. The sequence is that of Ly6/PLAUR domain-containing protein 3 (Lypd3) from Rattus norvegicus (Rat).